The primary structure comprises 97 residues: Ig heavy chain V region 914 (97 aa).

In terms of domain architecture, Ig-like spans 1-97 (EVKLVESGGG…EDTAMYYCAR (97 aa)).

The protein is Ig heavy chain V region 914 of Mus musculus (Mouse).